Reading from the N-terminus, the 359-residue chain is MAP kinase-activated protein kinase 2 (359 aa).

The 262-residue stretch at 20-281 (VTSNTVLGYG…IQDVISNKWI (262 aa)) folds into the Protein kinase domain. Residues 26 to 34 (LGYGINGKV) and K49 each bind ATP. Residue D142 is the Proton acceptor of the active site.

Belongs to the protein kinase superfamily. CAMK Ser/Thr protein kinase family. Post-translationally, phosphorylated and activated by MAP kinase.

It carries out the reaction L-seryl-[protein] + ATP = O-phospho-L-seryl-[protein] + ADP + H(+). It catalyses the reaction L-threonyl-[protein] + ATP = O-phospho-L-threonyl-[protein] + ADP + H(+). In terms of biological role, its physiological substrate seems to be the small heat shock protein (HSP27/HSP25). This Drosophila melanogaster (Fruit fly) protein is MAP kinase-activated protein kinase 2 (MAPk-Ak2).